Consider the following 252-residue polypeptide: 3-dehydroquinate dehydratase (252 aa).

Residues 46–48 (EWR) and Arg-82 each bind 3-dehydroquinate. His-143 serves as the catalytic Proton donor/acceptor. The active-site Schiff-base intermediate with substrate is Lys-170. Arg-212, Ser-231, and Gln-235 together coordinate 3-dehydroquinate.

Belongs to the type-I 3-dehydroquinase family. In terms of assembly, homodimer.

It catalyses the reaction 3-dehydroquinate = 3-dehydroshikimate + H2O. The protein operates within metabolic intermediate biosynthesis; chorismate biosynthesis; chorismate from D-erythrose 4-phosphate and phosphoenolpyruvate: step 3/7. Its function is as follows. Involved in the third step of the chorismate pathway, which leads to the biosynthesis of aromatic amino acids. Catalyzes the cis-dehydration of 3-dehydroquinate (DHQ) and introduces the first double bond of the aromatic ring to yield 3-dehydroshikimate. The sequence is that of 3-dehydroquinate dehydratase from Listeria monocytogenes serotype 4b (strain F2365).